Reading from the N-terminus, the 66-residue chain is Gas vesicle protein A (66 aa).

It belongs to the gas vesicle GvpA family. In terms of assembly, the gas vesicle shell is 2 nm thick and consists of a single layer of this protein. It forms helical ribs nearly perpendicular to the long axis of the vesicle.

It localises to the gas vesicle shell. In terms of biological role, gas vesicles are hollow, gas filled proteinaceous nanostructures found in some microorganisms. During planktonic growth they allow positioning of the organism at a favorable depth for light or nutrient acquisition. GvpA forms the protein shell. This Thiocapsa pendens (Amoebobacter pendens) protein is Gas vesicle protein A.